Reading from the N-terminus, the 251-residue chain is Cathelicidin-B1 (251 aa).

An N-terminal signal peptide occupies residues 1 to 20 (MGRMWASEVLLLLLLGSSRA). The propeptide occupies 21–211 (VTPGLDVSTA…ELRCRPLRPQ (191 aa)). The segment at 29–109 (TAPGLDGSIP…TITPKQDGSI (81 aa)) is disordered. Cystine bridges form between cysteine 172–cysteine 181 and cysteine 189–cysteine 205.

It belongs to the cathelicidin family. In terms of tissue distribution, detected in bursa of Fabricius, in filamentous structures surrounding the basal and lateral surfaces of bursal M cells (at protein level). Detected in bursa of Fabricius, in secretory enterocytes of the interfollicular bursal epithelium, but not in M cells.

Its subcellular location is the secreted. Has potent antimicrobial activity against Gram-positive and Gram-negative bacteria (in vitro). May play a role in the innate immune response. The polypeptide is Cathelicidin-B1 (CATHB1) (Gallus gallus (Chicken)).